The chain runs to 340 residues: Heat-inducible transcription repressor HrcA (340 aa).

It belongs to the HrcA family.

In terms of biological role, negative regulator of class I heat shock genes (grpE-dnaK-dnaJ and groELS operons). Prevents heat-shock induction of these operons. The polypeptide is Heat-inducible transcription repressor HrcA (Phytoplasma australiense).